The chain runs to 154 residues: Putative pre-16S rRNA nuclease (154 aa).

The protein belongs to the YqgF nuclease family.

The protein resides in the cytoplasm. Its function is as follows. Could be a nuclease involved in processing of the 5'-end of pre-16S rRNA. In Gluconacetobacter diazotrophicus (strain ATCC 49037 / DSM 5601 / CCUG 37298 / CIP 103539 / LMG 7603 / PAl5), this protein is Putative pre-16S rRNA nuclease.